We begin with the raw amino-acid sequence, 959 residues long: Glycine dehydrogenase (decarboxylating) (959 aa).

An N6-(pyridoxal phosphate)lysine modification is found at lysine 704.

Belongs to the GcvP family. As to quaternary structure, the glycine cleavage system is composed of four proteins: P, T, L and H. Requires pyridoxal 5'-phosphate as cofactor.

The catalysed reaction is N(6)-[(R)-lipoyl]-L-lysyl-[glycine-cleavage complex H protein] + glycine + H(+) = N(6)-[(R)-S(8)-aminomethyldihydrolipoyl]-L-lysyl-[glycine-cleavage complex H protein] + CO2. The glycine cleavage system catalyzes the degradation of glycine. The P protein binds the alpha-amino group of glycine through its pyridoxal phosphate cofactor; CO(2) is released and the remaining methylamine moiety is then transferred to the lipoamide cofactor of the H protein. In Parasynechococcus marenigrum (strain WH8102), this protein is Glycine dehydrogenase (decarboxylating).